The chain runs to 249 residues: Cytochrome c oxidase subunit 2 (249 aa).

The first 13 residues, 1–13, serve as a signal peptide directing secretion; the sequence is MLNLFQIMNMINN. Residues 14 to 40 are Mitochondrial intermembrane-facing; sequence DVPTPYGFYFQDSATPNQEGILELHDN. The helical transmembrane segment at 41–62 threads the bilayer; the sequence is IMFYLVVILGLVSWMLFTIVRT. The Mitochondrial matrix portion of the chain corresponds to 63-80; it reads YSRNPMAYKYIKHGQTIE. The helical transmembrane segment at 81 to 105 threads the bilayer; sequence IIWKIFPAVILLTIAFPSFILLYLC. Topologically, residues 106 to 249 are mitochondrial intermembrane; sequence DEVISPAMTI…PKFLEWLNEQ (144 aa). 6 residues coordinate Cu cation: histidine 184, cysteine 219, glutamate 221, cysteine 223, histidine 227, and methionine 230. Glutamate 221 serves as a coordination point for Mg(2+).

This sequence belongs to the cytochrome c oxidase subunit 2 family. In terms of assembly, component of the cytochrome c oxidase (complex IV, CIV), a multisubunit enzyme composed of a catalytic core of 3 subunits and several supernumerary subunits. The complex exists as a monomer or a dimer and forms supercomplexes (SCs) in the inner mitochondrial membrane with ubiquinol-cytochrome c oxidoreductase (cytochrome b-c1 complex, complex III, CIII). It depends on Cu cation as a cofactor. The signal sequence of COX2 is processed by IMP1.

Its subcellular location is the mitochondrion inner membrane. It carries out the reaction 4 Fe(II)-[cytochrome c] + O2 + 8 H(+)(in) = 4 Fe(III)-[cytochrome c] + 2 H2O + 4 H(+)(out). Component of the cytochrome c oxidase, the last enzyme in the mitochondrial electron transport chain which drives oxidative phosphorylation. The respiratory chain contains 3 multisubunit complexes succinate dehydrogenase (complex II, CII), ubiquinol-cytochrome c oxidoreductase (cytochrome b-c1 complex, complex III, CIII) and cytochrome c oxidase (complex IV, CIV), that cooperate to transfer electrons derived from NADH and succinate to molecular oxygen, creating an electrochemical gradient over the inner membrane that drives transmembrane transport and the ATP synthase. Cytochrome c oxidase is the component of the respiratory chain that catalyzes the reduction of oxygen to water. Electrons originating from reduced cytochrome c in the intermembrane space (IMS) are transferred via the dinuclear copper A center (CU(A)) of subunit 2 and heme A of subunit 1 to the active site in subunit 1, a binuclear center (BNC) formed by heme A3 and copper B (CU(B)). The BNC reduces molecular oxygen to 2 water molecules using 4 electrons from cytochrome c in the IMS and 4 protons from the mitochondrial matrix. In Maudiozyma exigua (Yeast), this protein is Cytochrome c oxidase subunit 2 (COX2).